Here is a 401-residue protein sequence, read N- to C-terminus: DNA damage checkpoint control protein RAD17 (401 aa).

The interval 367–393 (KKIKLPSEEENNKNRESEDEENHCKYP) is disordered. A compositionally biased stretch (basic and acidic residues) spans 371-393 (LPSEEENNKNRESEDEENHCKYP). Serine 383 bears the Phosphoserine mark.

The protein belongs to the rad1 family. As to quaternary structure, component of the checkpoint clamp complex composed of DDC1, MEC3 and RAD17. The interaction with MEC3 is performed in a RAD17-dependent manner. The checkpoint clamp complex loads onto DNA. Interacts with the DNA polymerase zeta subunit REV7. 2 RAD17 subunits also form a heterotrimer with one MEC3 subunit.

The protein resides in the nucleus. In terms of biological role, component of the checkpoint clamp complex involved in the surveillance mechanism that allows the DNA repair pathways to act to restore the integrity of the DNA prior to DNA synthesis or separation of the replicated chromosomes. Associates with sites of DNA damage and modulates the MEC1 signaling pathway and the activation of RAD53 in response to DNA damage at phase G1. The complex also physically regulates DNA polymerase zeta-dependent mutagenesis by controlling the access of polymerase zeta to damaged DNA. Contrary to its human counterpart, the 9-1-1 complex, the checkpoint clamp complex shows no detectable exonuclease activity. The sequence is that of DNA damage checkpoint control protein RAD17 (RAD17) from Saccharomyces cerevisiae (strain ATCC 204508 / S288c) (Baker's yeast).